The primary structure comprises 216 residues: Protein ADP-ribose pyrophosphatase ORF38 (216 aa).

In terms of domain architecture, Nudix hydrolase spans 1–177; sequence MRNAAGLFMI…DYSNYIEFFD (177 aa). The short motif at 48–70 is the Nudix box element; it reads GHRDCCDAKVYETAVREFVEETG.

The protein localises to the host cytoplasm. It localises to the host nucleus. The enzyme catalyses ADP-D-ribose + H2O = D-ribose 5-phosphate + AMP + 2 H(+). In terms of biological role, plays an important role in virus replication most probably through its hydrolyzing ADP-ribose activity in host cells. May function in viral DNA replication or transcription directly, or by removing toxic substances or metabolic intermediates. The polypeptide is Protein ADP-ribose pyrophosphatase ORF38 (Lepidoptera (butterflies and moths)).